A 229-amino-acid polypeptide reads, in one-letter code: Prolactin (229 aa).

A signal peptide spans 1–30 (MDSKGSAQKGSRLLLLLVVSNLLLCQGVVS). C34 and C41 are disulfide-bonded. Phosphoserine is present on S56. The N-linked (GlcNAc...) asparagine; partial glycan is linked to N61. S64 and S120 each carry phosphoserine. 2 cysteine pairs are disulfide-bonded: C88-C204 and C221-C229.

Belongs to the somatotropin/prolactin family. As to quaternary structure, interacts with PRLR.

It localises to the secreted. In terms of biological role, prolactin acts primarily on the mammary gland by promoting lactation, mammogenesis, mitogenesis and osmoregulation. This chain is Prolactin (PRL), found in Ovis aries (Sheep).